The sequence spans 117 residues: Large ribosomal subunit protein bL19 (117 aa).

The protein belongs to the bacterial ribosomal protein bL19 family.

In terms of biological role, this protein is located at the 30S-50S ribosomal subunit interface and may play a role in the structure and function of the aminoacyl-tRNA binding site. This chain is Large ribosomal subunit protein bL19, found in Vibrio cholerae serotype O1 (strain ATCC 39541 / Classical Ogawa 395 / O395).